The sequence spans 322 residues: Acetyl-coenzyme A carboxylase carboxyl transferase subunit alpha (322 aa).

Positions 39-293 constitute a CoA carboxyltransferase C-terminal domain; the sequence is RLASKSQQLT…KRALAESLRQ (255 aa).

It belongs to the AccA family. In terms of assembly, acetyl-CoA carboxylase is a heterohexamer composed of biotin carboxyl carrier protein (AccB), biotin carboxylase (AccC) and two subunits each of ACCase subunit alpha (AccA) and ACCase subunit beta (AccD).

The protein resides in the cytoplasm. The enzyme catalyses N(6)-carboxybiotinyl-L-lysyl-[protein] + acetyl-CoA = N(6)-biotinyl-L-lysyl-[protein] + malonyl-CoA. It functions in the pathway lipid metabolism; malonyl-CoA biosynthesis; malonyl-CoA from acetyl-CoA: step 1/1. Its function is as follows. Component of the acetyl coenzyme A carboxylase (ACC) complex. First, biotin carboxylase catalyzes the carboxylation of biotin on its carrier protein (BCCP) and then the CO(2) group is transferred by the carboxyltransferase to acetyl-CoA to form malonyl-CoA. The chain is Acetyl-coenzyme A carboxylase carboxyl transferase subunit alpha from Ralstonia pickettii (strain 12J).